The primary structure comprises 323 residues: tRNA U34 carboxymethyltransferase (323 aa).

Carboxy-S-adenosyl-L-methionine-binding positions include Lys-91, Trp-105, Lys-110, Gly-130, 152-154 (DPT), 181-182 (IE), Met-196, Tyr-200, and Arg-315.

The protein belongs to the class I-like SAM-binding methyltransferase superfamily. CmoB family. Homotetramer.

It carries out the reaction carboxy-S-adenosyl-L-methionine + 5-hydroxyuridine(34) in tRNA = 5-carboxymethoxyuridine(34) in tRNA + S-adenosyl-L-homocysteine + H(+). Functionally, catalyzes carboxymethyl transfer from carboxy-S-adenosyl-L-methionine (Cx-SAM) to 5-hydroxyuridine (ho5U) to form 5-carboxymethoxyuridine (cmo5U) at position 34 in tRNAs. The sequence is that of tRNA U34 carboxymethyltransferase from Shigella flexneri.